The following is a 360-amino-acid chain: Peptide chain release factor 1 (360 aa).

Q236 bears the N5-methylglutamine mark.

It belongs to the prokaryotic/mitochondrial release factor family. Methylated by PrmC. Methylation increases the termination efficiency of RF1.

Its subcellular location is the cytoplasm. In terms of biological role, peptide chain release factor 1 directs the termination of translation in response to the peptide chain termination codons UAG and UAA. In Ligilactobacillus salivarius (strain UCC118) (Lactobacillus salivarius), this protein is Peptide chain release factor 1.